The following is a 380-amino-acid chain: Glucose-1-phosphate adenylyltransferase (380 aa).

Alpha-D-glucose 1-phosphate contacts are provided by residues glycine 164, glutamate 179–lysine 180, and serine 190.

It belongs to the bacterial/plant glucose-1-phosphate adenylyltransferase family. As to quaternary structure, homotetramer.

The enzyme catalyses alpha-D-glucose 1-phosphate + ATP + H(+) = ADP-alpha-D-glucose + diphosphate. It functions in the pathway glycan biosynthesis; glycogen biosynthesis. In terms of biological role, involved in the biosynthesis of ADP-glucose, a building block required for the elongation reactions to produce glycogen. Catalyzes the reaction between ATP and alpha-D-glucose 1-phosphate (G1P) to produce pyrophosphate and ADP-Glc. The chain is Glucose-1-phosphate adenylyltransferase from Lacticaseibacillus casei (strain BL23) (Lactobacillus casei).